A 631-amino-acid chain; its full sequence is uncharacterized protein (631 aa).

The first 20 residues, 1–20 (MVRFVSILSLFGCAATLVTA), serve as a signal peptide directing secretion. The Lumenal segment spans residues 21-105 (HDDMDMDMDM…AGNRSALRYH (85 aa)). N-linked (GlcNAc...) asparagine glycosylation is found at Asn-87 and Asn-98. The chain crosses the membrane as a helical span at residues 106 to 126 (IITLLLVAFVLYPVSLALSAA). Topologically, residues 127–131 (RSRWY) are cytoplasmic. Residues 132 to 152 (LPLLFVNLCICISSVMALSVF) form a helical membrane-spanning segment. Residues 153-170 (KNTFPEEDWYAHNIYGTT) are Lumenal-facing. Residues 171 to 191 (SVLLLVFMLVHFFAAVLSVPV) traverse the membrane as a helical segment. Topologically, residues 192-322 (SLASKKEYRP…LSCVANVVFH (131 aa)) are cytoplasmic. The tract at residues 216–274 (MVNSARGSPSPSSNRDTLFSLSSDTTTATATNNNKRRRAEGEDEGDNTSNHDTLRDEDY) is disordered. Ser-219 is subject to Phosphoserine. Residues 220–239 (ARGSPSPSSNRDTLFSLSSD) show a composition bias toward polar residues. Residue Lys-250 forms a Glycyl lysine isopeptide (Lys-Gly) (interchain with G-Cter in ubiquitin) linkage. A helical transmembrane segment spans residues 323–343 (MLTYPLFMYIFVDLIIGFAVG). The Lumenal portion of the chain corresponds to 344–351 (NLLGKGIR). The helical transmembrane segment at 352–372 (IFNLLAHWIKGGVFFTLGVVS) threads the bilayer. Topologically, residues 373-407 (LARYCGFAAKYGWAWNNISFTSQLTQTRSSNLLFR) are cytoplasmic. A helical transmembrane segment spans residues 408–428 (FAPAGTFTMEFVESFLIFFYG). The Lumenal segment spans residues 429–451 (STNIFLEHLAGNGGAWTAKDLQH). A helical transmembrane segment spans residues 452-472 (VSIAFMFIGTGLCGLLTEYKL). Residues 473–529 (NHWRFEHARKRPQTDVVAATPGYSPNPFPAFTIFWTGILMSQHAQSSQFSTTIHTQW) lie on the Cytoplasmic side of the membrane. The chain crosses the membrane as a helical span at residues 530–550 (GYLLSYGSFFRLLTFLILFLV). Residues 551–598 (PNTNSAASKPFTELITSFCLLCGGLVFMESTDQSIEAMEYRGFTPMFT) lie on the Lumenal side of the membrane. The helical transmembrane segment at 599-619 (FNLSVGFVSLLMAWEMILFIW) threads the bilayer. Over 620 to 631 (KDWLIKTRKTSL) the chain is Cytoplasmic.

The protein to S.pombe SpBC3B8.06.

Its subcellular location is the membrane. This is an uncharacterized protein from Saccharomyces cerevisiae (strain ATCC 204508 / S288c) (Baker's yeast).